Consider the following 82-residue polypeptide: HLQFHCPRVERNQAKKNFSCKLCDKVYTSLGALKMHIRTHTLPCKCDICHKAFSRPWLLQGHIRTHTGEKPFSCQHCHRAFA.

4 consecutive C2H2-type zinc fingers follow at residues 1–5 (HLQFH), 18–40 (FSCKLCDKVYTSLGALKMHIRTH), 44–66 (CKCDICHKAFSRPWLLQGHIRTH), and 72–82 (FSCQHCHRAFA).

Belongs to the snail C2H2-type zinc-finger protein family.

Its subcellular location is the nucleus. The sequence is that of Escargot/snail protein homolog from Bradysia coprophila (Dark-winged fungus gnat).